The chain runs to 311 residues: Burkholderia TALE-like protein 3 (311 aa).

One copy of the Cryptic repeat -1 repeat lies at 19–50 (LSPFECLKIEKHSGGADALEFISNKYDALTQV). A Cryptic repeat 0 repeat occupies 51 to 83 (LSRADILKIACHDCAAHALQAVLDYEQVFRQRG). Core repeat repeat units follow at residues 84–116 (FARADIIKITGNGGGAQALKAVVVHGPTLNECG), 117–149 (FSQADIVRIADNIGGAQALKAVLEHGPTLNERD), 150–182 (YSGADIVKIAGNGGGARALKAVVMHGPTLCESG), 183–215 (YSGADIVKIASNGGGAQALEAVAMHGSTLCERG), 216–248 (YCRTDIAKIAGNGGGAQALKAIVMHGPTLCERG), and 249–281 (YSRTDIVKIADNNGGAQALKAVFEHGPALTQAG). The stretch at 282 to 311 (RSNEDIVNMAARTGAAGQIRKMAAQLSGRQ) is one Cryptic repeat +1 repeat.

This sequence belongs to the transcription activator-like effector (TALE) family. Bat subfamily.

Functionally, does not bind DNA, probably because it has too few core repeats. In Mycetohabitans rhizoxinica (strain DSM 19002 / CIP 109453 / HKI 454) (Paraburkholderia rhizoxinica), this protein is Burkholderia TALE-like protein 3.